The primary structure comprises 437 residues: MALNKLKNIPSLTNSSHSSINGIASNAANSKPSGADTDDIDENDESGQSILLNIISQLKPGCDLSRITLPTFILEKKSMLERITNQLQFPDVLLEAHSNKDGLQRFVKVVAWYLAGWHIGPRAVKKPLNPILGEHFTAYWDLPNKQQAFYIAEQTSHHPPESAYFYMIPESNIRVDGVVVPKSKFLGNSSAAMMEGLTVLQFLDIKDANGKPEKYTLSQPNVYARGILFGKMRIELGDHMVIMGPKYQVDIEFKTKGFISGTYDAIEGTIKDYDGKEYYQISGKWNDIMYIKDLREKSSKKTVLFDTHQHFPLAPKVRPLEEQGEYESRRLWKKVTDALAVRDHEVATEEKFQIENRQRELAKKRAEDGVEFHSKLFRRAEPGEDLDYYIYKHIPEGTDKHEEQIRSILETAPILPGQTFTEKFSIPAYKKHGIQKN.

Residues 23-32 (IASNAANSKP) are compositionally biased toward polar residues. Residues 23–42 (IASNAANSKPSGADTDDIDE) are disordered. An OSBP-related domain (ORD) region spans residues 54 to 393 (IISQLKPGCD…EDLDYYIYKH (340 aa)). A 1,2-diacyl-sn-glycero-3-phospho-(1D-myo-inositol 4-phosphate) contacts are provided by residues 64 to 69 (LSRITL), 126 to 129 (KPLN), and 157 to 158 (HH). A 1,2-diacyl-sn-glycero-3-phospho-L-serine contacts are provided by residues 64–69 (LSRITL) and Asn-129. An a 1,2-diacyl-sn-glycero-3-phospho-L-serine-binding site is contributed by Ser-183. Lys-276 is covalently cross-linked (Glycyl lysine isopeptide (Lys-Gly) (interchain with G-Cter in ubiquitin)). Positions 351, 355, and 359 each coordinate a 1,2-diacyl-sn-glycero-3-phospho-(1D-myo-inositol 4-phosphate).

The protein belongs to the OSBP family. In terms of assembly, interacts with the AAA ATPase VPS4; regulates OSH7 membrane association. VPS4 is required for membrane dissociation of OSH7.

The protein localises to the cytoplasm. It localises to the cell membrane. Its subcellular location is the endoplasmic reticulum membrane. The enzyme catalyses a 1,2-diacyl-sn-glycero-3-phospho-L-serine(in) = a 1,2-diacyl-sn-glycero-3-phospho-L-serine(out). In terms of biological role, ipid transport protein (LTP) involved in non-vesicular transfer of lipids between membranes. Functions in phosphoinositide-coupled directional transport of various lipids by carrying the lipid molecule in a hydrophobic pocket and transferring it between membranes through the cytosol. Involved in maintenance of intracellular sterol distribution and homeostasis. Involved in lipid countertransport between the endoplasmic reticulum and the plasma membrane. Specifically exchanges phosphatidylserine with phosphatidylinositol 4-phosphate (PI4P), delivering phosphatidylserine to the PM in exchange for PI4P, which is delivered to the ER-localized PI4P phosphatase SAC1 for degradation. Thus, by maintaining a PI4P gradient at the ER/PM interface, SAC1 drives PS transport. Binds phosphatidylserine and PI4P in a mutually exclusive manner. The chain is Oxysterol-binding protein homolog 7 from Saccharomyces cerevisiae (strain ATCC 204508 / S288c) (Baker's yeast).